Here is a 488-residue protein sequence, read N- to C-terminus: C2H2-type transcription factor MSN2 (488 aa).

2 consecutive C2H2-type zinc fingers follow at residues 376–399 (FVCD…RSLH) and 405–427 (FECN…ARTH).

The protein resides in the nucleus. It is found in the cytoplasm. Its function is as follows. Transcription factor that acts as a key downstream transcription factor in the HOG1-MAPK pathway. Plays crucial roles in the regulation of conidiation, virulence and multi-stress responses. Acts as a negative regulator of proteases, lipases, as well as of the red-pigmented oosporein production, and contributes to virulence and growth in response to external pH. Contributes to the ability to infect Rhipicephalus microplus (Acari, Ixodidae) via the cuticle-penetration requiring route involving proteolytic activity at the host cuticle. Does not seem to be involved in subsequent growth and proliferation once the tick cuticle has been breached. The sequence is that of C2H2-type transcription factor MSN2 from Beauveria bassiana (strain ARSEF 2860) (White muscardine disease fungus).